A 635-amino-acid polypeptide reads, in one-letter code: DNA topoisomerase 4 subunit B (635 aa).

ATP-binding positions include Tyr5, Asn45, Asp72, 113-119 (GLHGVGA), and Lys340. In terms of domain architecture, Toprim spans 422–537 (RELFVVEGDS…KGHIYLALPP (116 aa)). Mg(2+) contacts are provided by Glu428, Asp502, and Asp504.

The protein belongs to the type II topoisomerase family. ParE type 2 subfamily. Heterotetramer composed of ParC and ParE. Requires Mg(2+) as cofactor. Mn(2+) is required as a cofactor. It depends on Ca(2+) as a cofactor.

It carries out the reaction ATP-dependent breakage, passage and rejoining of double-stranded DNA.. Topoisomerase IV is essential for chromosome segregation. It relaxes supercoiled DNA. Performs the decatenation events required during the replication of a circular DNA molecule. The sequence is that of DNA topoisomerase 4 subunit B from Mycoplasma pneumoniae (strain ATCC 29342 / M129 / Subtype 1) (Mycoplasmoides pneumoniae).